Reading from the N-terminus, the 269-residue chain is Hydroxyethylthiazole kinase (269 aa).

M46 is a substrate binding site. 2 residues coordinate ATP: R121 and T166. G193 contacts substrate.

Belongs to the Thz kinase family. The cofactor is Mg(2+).

It catalyses the reaction 5-(2-hydroxyethyl)-4-methylthiazole + ATP = 4-methyl-5-(2-phosphooxyethyl)-thiazole + ADP + H(+). It functions in the pathway cofactor biosynthesis; thiamine diphosphate biosynthesis; 4-methyl-5-(2-phosphoethyl)-thiazole from 5-(2-hydroxyethyl)-4-methylthiazole: step 1/1. In terms of biological role, catalyzes the phosphorylation of the hydroxyl group of 4-methyl-5-beta-hydroxyethylthiazole (THZ). The protein is Hydroxyethylthiazole kinase of Limosilactobacillus reuteri (strain DSM 20016) (Lactobacillus reuteri).